A 487-amino-acid polypeptide reads, in one-letter code: UDP-N-acetylmuramate--L-alanine ligase (487 aa).

124–130 is an ATP binding site; that stretch reads GTHGKTT.

Belongs to the MurCDEF family.

It is found in the cytoplasm. The catalysed reaction is UDP-N-acetyl-alpha-D-muramate + L-alanine + ATP = UDP-N-acetyl-alpha-D-muramoyl-L-alanine + ADP + phosphate + H(+). The protein operates within cell wall biogenesis; peptidoglycan biosynthesis. Cell wall formation. The chain is UDP-N-acetylmuramate--L-alanine ligase from Acaryochloris marina (strain MBIC 11017).